Reading from the N-terminus, the 2073-residue chain is Histone acetyltransferase KAT6B (2073 aa).

The SAMD1-like winged helix (WH) domain maps to 1 to 77 (MVKLANPLYT…LASYKDPDNP (77 aa)). A disordered region spans residues 72 to 97 (KDPDNPGRFSSVKPGTFPKSAKGSRG). The H15 domain maps to 103–176 (RNVDWNKLLR…KDGPQYRVNY (74 aa)). 2 PHD-type zinc fingers span residues 213-272 (IPIC…CKTC) and 269-320 (CKTC…CRPK). Ser355 bears the Phosphoserine mark. Disordered regions lie at residues 360-409 (EGSM…RPGA), 442-531 (FTPS…VPSL), 553-583 (TQGQSRKKGHPSYAPPKRMRRKTELSSTAKS), and 639-663 (VTPQMGTPSPGKGSLTDGRIKPDQD). A negatively regulates HAT activity region spans residues 361–717 (GSMNAFTGRG…ECESGVEDCG (357 aa)). Over residues 379–399 (KVCTTPSSGHAASGKDSSSRL) the composition is skewed to polar residues. The span at 447-460 (DGRRSRGEIIDFSK) shows a compositional bias: basic and acidic residues. A compositionally biased stretch (polar residues) spans 470-485 (QKQSCTSHVLATGTTQ). Pro residues predominate over residues 488 to 499 (KPPPSSLPPPTP). Over residues 501 to 531 (SGQSPSSQKSSTATSSPSPQSSSSQCSVPSL) the composition is skewed to low complexity. Ser647 bears the Phosphoserine mark. Residue Lys673 forms a Glycyl lysine isopeptide (Lys-Gly) (interchain with G-Cter in SUMO2) linkage. The 275-residue stretch at 715–989 (DCGRYPSVIE…LDPDSLRWTP (275 aa)) folds into the MYST-type HAT domain. The segment at 718 to 1008 (RYPSVIEFGK…EEEREAEKEA (291 aa)) is catalytic. The segment at 748-773 (LYLCEFCLKYMKSKNILLRHSKKCGW) adopts a C2HC MYST-type zinc-finger fold. The segment at 752-1008 (EFCLKYMKSK…EEEREAEKEA (257 aa)) is interaction with BRPF1. Lys815 carries the N6-acetyllysine; by autocatalysis modification. Residues 856-860 (SCIMI) and 865-871 (QRQGFGR) contribute to the acetyl-CoA site. Catalysis depends on Glu891, which acts as the Proton donor/acceptor. Ser895 is an acetyl-CoA binding site. 3 disordered regions span residues 1022–1452 (EQEI…FKEV), 1484–1538 (SCNS…MEID), and 1580–1619 (QSPQIATTLDDCQQSDHSSPVSSVHSHPGQSVRSVNSPSV). Over residues 1025-1043 (ILSTRANSRQSPAKVQSKN) the composition is skewed to polar residues. Residues Lys1038, Lys1042, and Lys1044 each carry the N6-acetyllysine modification. Phosphoserine is present on Ser1048. A compositionally biased stretch (acidic residues) spans 1069 to 1105 (SEEEEEEEDEEEEEEEEEEEEDEEEEEEEEEEEEEEN). Over residues 1106–1117 (IQSSPPRLTKPQ) the composition is skewed to polar residues. Residues 1121-1140 (IKRKRPFVLKKKRGRKRRRI) are compositionally biased toward basic residues. Residues 1142–1155 (SSVTTETISETTEV) show a composition bias toward low complexity. The span at 1187–1200 (PVLRKAFQHQPGKK) shows a compositional bias: basic residues. 3 stretches are compositionally biased toward basic and acidic residues: residues 1229–1243 (SNLKEGSKDNPEPLK), 1306–1315 (RIEEEVKETG), and 1341–1350 (EKPEDDLIKP). Over residues 1351–1374 (EEEEEEEEEEEEEEEEEEGEEEEG) the composition is skewed to acidic residues. Basic and acidic residues-rich tracts occupy residues 1378 to 1390 (VEKDPDGAKSQEK) and 1396 to 1407 (STEKEDSARLDD). Over residues 1408 to 1417 (HEEEEEEDEE) the composition is skewed to acidic residues. The segment covering 1433-1452 (HMESAEVEKEELPRESFKEV) has biased composition (basic and acidic residues). Acidic residues predominate over residues 1498–1507 (AVPESDEEPP). Residues 1513–1529 (QKQDQKNSKEVDTEFKE) are compositionally biased toward basic and acidic residues. The segment at 1560-2073 (QDCAETQEAC…QSLNGSYMRR (514 aa)) is interaction with RUNX1 and RUNX2. Polar residues predominate over residues 1580–1591 (QSPQIATTLDDC). The span at 1594–1611 (SDHSSPVSSVHSHPGQSV) shows a compositional bias: low complexity.

It belongs to the MYST (SAS/MOZ) family. As to quaternary structure, component of the MOZ/MORF complex composed at least of ING5, KAT6A, KAT6B, MEAF6 and one of BRPF1, BRD1/BRPF2 and BRPF3. Interacts with RUNX1 and RUNX2. In terms of processing, autoacetylated. Autoacetylation at Lys-815 is required for proper function. As to expression, ubiquitously expressed, with high levels in heart, pancreas, testis and ovary.

It is found in the nucleus. The enzyme catalyses L-lysyl-[protein] + acetyl-CoA = N(6)-acetyl-L-lysyl-[protein] + CoA + H(+). In terms of biological role, histone acetyltransferase which may be involved in both positive and negative regulation of transcription. Required for RUNX2-dependent transcriptional activation. May be involved in cerebral cortex development. Component of the MOZ/MORF complex which has a histone H3 acetyltransferase activity. The chain is Histone acetyltransferase KAT6B (KAT6B) from Homo sapiens (Human).